The primary structure comprises 257 residues: uncharacterized protein (257 aa).

Residues Ser-122 and His-236 each act as charge relay system in the active site.

It belongs to the peptidase S9B family.

This is an uncharacterized protein from Bacillus subtilis (strain 168).